Reading from the N-terminus, the 612-residue chain is Baeyer-Villiger monooxygenase 4 (612 aa).

Residues Glu-99, 107–110, Asp-119, Tyr-125, and Ala-169 each bind FAD; that span reads TWYW. 117–119 serves as a coordination point for NADP(+); that stretch reads QCD. NADP(+)-binding positions include 253–259, 276–277, and 393–394; these read TGATGVQ, RT, and KR.

Belongs to the FAD-binding monooxygenase family. It depends on FAD as a cofactor.

Its function is as follows. Catalyzes a Baeyer-Villiger oxidation reaction, i.e. the insertion of an oxygen atom into a carbon-carbon bond adjacent to a carbonyl, which converts ketones to esters or lactones using NADPH as an electron donor. Has a broad substrate scope and oxidizes different compounds including substituted and unsubstituted alicyclic, bicyclic-, aliphatic-ketones, ketones with an aromatic moiety, and sulfides. The highest activities are measured for 2- and 3-methylcyclohexanone, phenylacetone, bicyclo[3.2.0]hept-2-en-6-one and menthone. Cannot use NADH instead of NADPH. Is not active on benzaldehyde. The sequence is that of Baeyer-Villiger monooxygenase 4 from Dietzia sp. (strain D5).